The sequence spans 317 residues: Acetyl-coenzyme A carboxylase carboxyl transferase subunit alpha (317 aa).

Residues 39–293 (KLEDKNRKLT…KDALGASLER (255 aa)) enclose the CoA carboxyltransferase C-terminal domain.

The protein belongs to the AccA family. In terms of assembly, acetyl-CoA carboxylase is a heterohexamer composed of biotin carboxyl carrier protein (AccB), biotin carboxylase (AccC) and two subunits each of ACCase subunit alpha (AccA) and ACCase subunit beta (AccD).

It localises to the cytoplasm. The catalysed reaction is N(6)-carboxybiotinyl-L-lysyl-[protein] + acetyl-CoA = N(6)-biotinyl-L-lysyl-[protein] + malonyl-CoA. It participates in lipid metabolism; malonyl-CoA biosynthesis; malonyl-CoA from acetyl-CoA: step 1/1. In terms of biological role, component of the acetyl coenzyme A carboxylase (ACC) complex. First, biotin carboxylase catalyzes the carboxylation of biotin on its carrier protein (BCCP) and then the CO(2) group is transferred by the carboxyltransferase to acetyl-CoA to form malonyl-CoA. In Chromohalobacter salexigens (strain ATCC BAA-138 / DSM 3043 / CIP 106854 / NCIMB 13768 / 1H11), this protein is Acetyl-coenzyme A carboxylase carboxyl transferase subunit alpha.